Here is a 360-residue protein sequence, read N- to C-terminus: Phospho-N-acetylmuramoyl-pentapeptide-transferase (360 aa).

The next 10 membrane-spanning stretches (helical) occupy residues 25–45, 73–93, 97–117, 142–162, 167–187, 199–219, 236–256, 263–283, 288–308, and 338–358; these read RGIL…PWMI, TMGG…WADL, YVWV…VDDY, IGAA…TLIV, SVEI…IVGS, GLAI…CYLS, AGEL…FLWF, VFMG…IAVI, IVLF…MIQV, and VIVR…ATLK.

The protein belongs to the glycosyltransferase 4 family. MraY subfamily. Mg(2+) serves as cofactor.

Its subcellular location is the cell inner membrane. The catalysed reaction is UDP-N-acetyl-alpha-D-muramoyl-L-alanyl-gamma-D-glutamyl-meso-2,6-diaminopimeloyl-D-alanyl-D-alanine + di-trans,octa-cis-undecaprenyl phosphate = di-trans,octa-cis-undecaprenyl diphospho-N-acetyl-alpha-D-muramoyl-L-alanyl-D-glutamyl-meso-2,6-diaminopimeloyl-D-alanyl-D-alanine + UMP. Its pathway is cell wall biogenesis; peptidoglycan biosynthesis. In terms of biological role, catalyzes the initial step of the lipid cycle reactions in the biosynthesis of the cell wall peptidoglycan: transfers peptidoglycan precursor phospho-MurNAc-pentapeptide from UDP-MurNAc-pentapeptide onto the lipid carrier undecaprenyl phosphate, yielding undecaprenyl-pyrophosphoryl-MurNAc-pentapeptide, known as lipid I. This chain is Phospho-N-acetylmuramoyl-pentapeptide-transferase, found in Pseudomonas aeruginosa (strain LESB58).